Here is a 124-residue protein sequence, read N- to C-terminus: Small ribosomal subunit protein uS12 (124 aa).

Residues 1-30 (MPTIQQLVRKGRRDKVAKVKTAALKGSPQR) are disordered. Aspartate 89 is modified (3-methylthioaspartic acid). Residues 105-124 (QGVKNRKQARSRYGAKKEKS) are disordered. Over residues 108 to 118 (KNRKQARSRYG) the composition is skewed to basic residues.

This sequence belongs to the universal ribosomal protein uS12 family. As to quaternary structure, part of the 30S ribosomal subunit. Contacts proteins S8 and S17. May interact with IF1 in the 30S initiation complex.

In terms of biological role, with S4 and S5 plays an important role in translational accuracy. Interacts with and stabilizes bases of the 16S rRNA that are involved in tRNA selection in the A site and with the mRNA backbone. Located at the interface of the 30S and 50S subunits, it traverses the body of the 30S subunit contacting proteins on the other side and probably holding the rRNA structure together. The combined cluster of proteins S8, S12 and S17 appears to hold together the shoulder and platform of the 30S subunit. This Mycobacterium intracellulare protein is Small ribosomal subunit protein uS12.